The following is a 357-amino-acid chain: DNA polymerase IV 2 (357 aa).

The UmuC domain maps to 4–184 (IIHVDMDAFY…LAVKKFHGVG (181 aa)). Residues Asp8 and Asp102 each contribute to the Mg(2+) site. Glu103 is a catalytic residue.

This sequence belongs to the DNA polymerase type-Y family. Monomer. Mg(2+) serves as cofactor.

It is found in the cytoplasm. The catalysed reaction is DNA(n) + a 2'-deoxyribonucleoside 5'-triphosphate = DNA(n+1) + diphosphate. Its function is as follows. Poorly processive, error-prone DNA polymerase involved in untargeted mutagenesis. Copies undamaged DNA at stalled replication forks, which arise in vivo from mismatched or misaligned primer ends. These misaligned primers can be extended by PolIV. Exhibits no 3'-5' exonuclease (proofreading) activity. May be involved in translesional synthesis, in conjunction with the beta clamp from PolIII. This Agrobacterium fabrum (strain C58 / ATCC 33970) (Agrobacterium tumefaciens (strain C58)) protein is DNA polymerase IV 2 (dinB2).